Reading from the N-terminus, the 65-residue chain is Large ribosomal subunit protein bL33c (65 aa).

Belongs to the bacterial ribosomal protein bL33 family.

The protein resides in the plastid. The protein localises to the chloroplast. This is Large ribosomal subunit protein bL33c (rpl33) from Porphyra purpurea (Red seaweed).